Consider the following 869-residue polypeptide: Synaptonemal complex protein ZEP1 (869 aa).

3 coiled-coil regions span residues 64–298 (TDLE…SGFT), 330–614 (HEEK…SERY), and 641–713 (RAYH…WKVM). Residues 841–869 (GSHPHPANIGELFSEGSLNPYAEDPYAFG) are disordered.

Interacts with CRC1. As to expression, highly expressed in panicles.

It localises to the nucleus. The protein localises to the chromosome. In terms of biological role, required for chromosome synapsis and regulates crossover frequency during meiosis. Acts as a transverse filament protein and constitutes the central element of the synaptonemal complex. This Oryza sativa subsp. japonica (Rice) protein is Synaptonemal complex protein ZEP1 (ZEP1).